We begin with the raw amino-acid sequence, 515 residues long: GMP synthase [glutamine-hydrolyzing] (515 aa).

The Glutamine amidotransferase type-1 domain maps to 6–198 (KVIILDFGSQ…VFKVAGLKAD (193 aa)). Cys-83 serves as the catalytic Nucleophile. Active-site residues include His-172 and Glu-174. The region spanning 199–390 (WTMSSFVENC…LGLPEFIIWR (192 aa)) is the GMPS ATP-PPase domain. 226–232 (SGGIDST) is an ATP binding site.

As to quaternary structure, homodimer.

The enzyme catalyses XMP + L-glutamine + ATP + H2O = GMP + L-glutamate + AMP + diphosphate + 2 H(+). The protein operates within purine metabolism; GMP biosynthesis; GMP from XMP (L-Gln route): step 1/1. Catalyzes the synthesis of GMP from XMP. This Maridesulfovibrio salexigens (strain ATCC 14822 / DSM 2638 / NCIMB 8403 / VKM B-1763) (Desulfovibrio salexigens) protein is GMP synthase [glutamine-hydrolyzing].